We begin with the raw amino-acid sequence, 491 residues long: Acetyl-coenzyme A carboxylase carboxyl transferase subunit beta, chloroplastic (491 aa).

The interval 26–49 (ARPRPIGNTNGSQDPSINDRDKNG) is disordered. Over residues 32–41 (GNTNGSQDPS) the composition is skewed to polar residues. The CoA carboxyltransferase N-terminal domain maps to 222 to 491 (LWVQCDNCYG…PLNHNSQVKR (270 aa)). 4 residues coordinate Zn(2+): C226, C229, C245, and C248. A C4-type zinc finger spans residues 226 to 248 (CDNCYGLNYKKIFSSKMNICEQC).

Belongs to the AccD/PCCB family. Acetyl-CoA carboxylase is a heterohexamer composed of biotin carboxyl carrier protein, biotin carboxylase and 2 subunits each of ACCase subunit alpha and ACCase plastid-coded subunit beta (accD). It depends on Zn(2+) as a cofactor.

It localises to the plastid. Its subcellular location is the chloroplast stroma. The enzyme catalyses N(6)-carboxybiotinyl-L-lysyl-[protein] + acetyl-CoA = N(6)-biotinyl-L-lysyl-[protein] + malonyl-CoA. Its pathway is lipid metabolism; malonyl-CoA biosynthesis; malonyl-CoA from acetyl-CoA: step 1/1. Functionally, component of the acetyl coenzyme A carboxylase (ACC) complex. Biotin carboxylase (BC) catalyzes the carboxylation of biotin on its carrier protein (BCCP) and then the CO(2) group is transferred by the transcarboxylase to acetyl-CoA to form malonyl-CoA. This is Acetyl-coenzyme A carboxylase carboxyl transferase subunit beta, chloroplastic from Ceratophyllum demersum (Rigid hornwort).